Reading from the N-terminus, the 461-residue chain is GTPase Der (461 aa).

EngA-type G domains are found at residues 9 to 171 (KTIA…DLNQ) and 200 to 371 (IQVG…ECFS). Residues 15-22 (GQPNVGKS), 62-66 (DTGGM), 123-126 (NKID), 206-213 (GRVNVGKS), 253-257 (DTAGI), and 317-320 (NKWD) contribute to the GTP site. The KH-like domain maps to 372–456 (KRIPTSLLNS…PLILNAKDKK (85 aa)).

This sequence belongs to the TRAFAC class TrmE-Era-EngA-EngB-Septin-like GTPase superfamily. EngA (Der) GTPase family. Associates with the 50S ribosomal subunit.

Functionally, GTPase that plays an essential role in the late steps of ribosome biogenesis. This chain is GTPase Der, found in Helicobacter pylori (strain Shi470).